Reading from the N-terminus, the 370-residue chain is Pyruvate dehydrogenase E1 component subunit alpha (370 aa).

As to quaternary structure, heterodimer of an alpha and a beta chain. It depends on thiamine diphosphate as a cofactor.

It catalyses the reaction N(6)-[(R)-lipoyl]-L-lysyl-[protein] + pyruvate + H(+) = N(6)-[(R)-S(8)-acetyldihydrolipoyl]-L-lysyl-[protein] + CO2. Functionally, the pyruvate dehydrogenase complex catalyzes the overall conversion of pyruvate to acetyl-CoA and CO(2). It contains multiple copies of three enzymatic components: pyruvate dehydrogenase (E1), dihydrolipoamide acetyltransferase (E2) and lipoamide dehydrogenase (E3). The sequence is that of Pyruvate dehydrogenase E1 component subunit alpha (pdhA) from Staphylococcus aureus (strain MRSA252).